The primary structure comprises 50 residues: Small ribosomal subunit protein uS14 (50 aa).

Positions 15, 18, 33, and 36 each coordinate Zn(2+).

It belongs to the universal ribosomal protein uS14 family. Zinc-binding uS14 subfamily. As to quaternary structure, part of the 30S ribosomal subunit. Zn(2+) serves as cofactor.

Its function is as follows. Binds 16S rRNA, required for the assembly of 30S particles. This is Small ribosomal subunit protein uS14 from Methanothermobacter thermautotrophicus (strain ATCC 29096 / DSM 1053 / JCM 10044 / NBRC 100330 / Delta H) (Methanobacterium thermoautotrophicum).